A 245-amino-acid polypeptide reads, in one-letter code: NAD(P)H-hydrate epimerase (245 aa).

A YjeF N-terminal domain is found at A16 to V224. N68–D72 lines the (6S)-NADPHX pocket. K(+) is bound by residues N69 and D131. Residues G135–P141 and D164 each bind (6S)-NADPHX. Residue S167 participates in K(+) binding.

This sequence belongs to the NnrE/AIBP family. It depends on K(+) as a cofactor.

The protein localises to the cytoplasm. It localises to the mitochondrion. The enzyme catalyses (6R)-NADHX = (6S)-NADHX. It catalyses the reaction (6R)-NADPHX = (6S)-NADPHX. In terms of biological role, catalyzes the epimerization of the S- and R-forms of NAD(P)HX, a damaged form of NAD(P)H that is a result of enzymatic or heat-dependent hydration. This is a prerequisite for the S-specific NAD(P)H-hydrate dehydratase to allow the repair of both epimers of NAD(P)HX. This Yarrowia lipolytica (strain CLIB 122 / E 150) (Yeast) protein is NAD(P)H-hydrate epimerase.